A 387-amino-acid chain; its full sequence is Protein ERD1 homolog 2 (387 aa).

8 consecutive transmembrane segments (helical) span residues 20–40 (IGLLVIVGTWLWSVCYHLIYI), 92–112 (AGYCFAAILSISWATGFILFL), 126–146 (PIYPLLWVITAFILIVFPFPW), 177–197 (FIVSEIFTSYAKALGDFYIFG), 217–237 (GTFFVPLAMAYPFIVAILQCL), 252–272 (LLSALKHATALPVIYLSAIIH), 285–305 (GYLFWLWILSALLSSAYTFLW), and 326–346 (FPMFIYAIGCFINFILRVTWS). In terms of domain architecture, EXS spans 212–387 (DLKCDGTFFV…LFFHLDAISS (176 aa)).

The protein belongs to the ERD1 family.

The protein resides in the membrane. This is Protein ERD1 homolog 2 from Schizosaccharomyces pombe (strain 972 / ATCC 24843) (Fission yeast).